Here is a 102-residue protein sequence, read N- to C-terminus: Small ribosomal subunit protein uS10 (102 aa).

Residues 34-58 form a disordered region; the sequence is VSGPVPLPTKTLEVPSRKSPDGEGT.

Belongs to the universal ribosomal protein uS10 family. Part of the 30S ribosomal subunit.

Its function is as follows. Involved in the binding of tRNA to the ribosomes. The polypeptide is Small ribosomal subunit protein uS10 (Halobacterium salinarum (strain ATCC 29341 / DSM 671 / R1)).